The primary structure comprises 189 residues: 6,7-dimethyl-8-ribityllumazine synthase (189 aa).

5-amino-6-(D-ribitylamino)uracil is bound by residues W31, 65 to 67 (SFE), and 89 to 91 (CVI). 94-95 (ET) serves as a coordination point for (2S)-2-hydroxy-3-oxobutyl phosphate. H97 functions as the Proton donor in the catalytic mechanism. A 5-amino-6-(D-ribitylamino)uracil-binding site is contributed by F122. Residue R136 participates in (2S)-2-hydroxy-3-oxobutyl phosphate binding.

It belongs to the DMRL synthase family.

It carries out the reaction (2S)-2-hydroxy-3-oxobutyl phosphate + 5-amino-6-(D-ribitylamino)uracil = 6,7-dimethyl-8-(1-D-ribityl)lumazine + phosphate + 2 H2O + H(+). Its pathway is cofactor biosynthesis; riboflavin biosynthesis; riboflavin from 2-hydroxy-3-oxobutyl phosphate and 5-amino-6-(D-ribitylamino)uracil: step 1/2. Its function is as follows. Catalyzes the formation of 6,7-dimethyl-8-ribityllumazine by condensation of 5-amino-6-(D-ribitylamino)uracil with 3,4-dihydroxy-2-butanone 4-phosphate. This is the penultimate step in the biosynthesis of riboflavin. This is 6,7-dimethyl-8-ribityllumazine synthase from Flavobacterium psychrophilum (strain ATCC 49511 / DSM 21280 / CIP 103535 / JIP02/86).